Reading from the N-terminus, the 683-residue chain is Transforming growth factor-beta-induced protein ig-h3 (683 aa).

A signal peptide spans 1 to 23; that stretch reads MALFVRLLALALALALGPAATLA. Phosphoserine is present on serine 37. Positions 45 to 99 constitute an EMI domain; the sequence is GPNVCAVQKVIGTNRKYFTNCKQWYQRKICGKSTVISYECCPGYEKVPGERSCPA. Cystine bridges form between cysteine 49–cysteine 85, cysteine 74–cysteine 339, cysteine 84–cysteine 97, cysteine 214–cysteine 317, and cysteine 473–cysteine 478. Position 65 is an S-cysteinyl cysteine (cysteine 65). 4 consecutive FAS1 domains span residues 103-236, 240-371, 375-498, and 502-632; these read LANL…DKVI, TNNI…DELL, SAKT…DRML, and SGTV…TSVL. Residues 642 to 644 carry the Cell attachment site motif; the sequence is RGD.

As to quaternary structure, binds to type I, II, and IV collagens. In terms of processing, gamma-carboxylation is controversial. Gamma-carboxyglutamated; gamma-carboxyglutamate residues are formed by vitamin K dependent carboxylation; this may be required for calcium binding. According to a more recent report, does not contain vitamin K-dependent gamma-carboxyglutamate residues. Post-translationally, the EMI domain contains 2 expected intradomain disulfide bridges (Cys-49-Cys85 and Cys-84-Cys-97) and one unusual interdomain disulfide bridge to the second FAS1 domain (Cys-74-Cys-339). This arrangement violates the predicted disulfide bridge pattern of an EMI domain. As to expression, located primarily in the epithelium of normal adult cornea, in fetal stromal cells, and both endothelium- and stroma-derived cells in healing corneal wounds. Not expressed in normal adult endothelium and stroma.

The protein localises to the secreted. It is found in the extracellular space. It localises to the extracellular matrix. In terms of biological role, plays a role in cell adhesion. May play a role in cell-collagen interactions. The polypeptide is Transforming growth factor-beta-induced protein ig-h3 (TGFBI) (Oryctolagus cuniculus (Rabbit)).